The primary structure comprises 154 residues: Small ribosomal subunit protein uS9 (154 aa).

Positions 135 to 154 are disordered; it reads KESKKYGLKKARKAPQYSKR. Basic residues predominate over residues 140-154; it reads YGLKKARKAPQYSKR.

This sequence belongs to the universal ribosomal protein uS9 family.

This Salinispora arenicola (strain CNS-205) protein is Small ribosomal subunit protein uS9.